Here is a 179-residue protein sequence, read N- to C-terminus: Replication restart protein DnaT (179 aa).

The interval 156–179 is disordered; that stretch reads GGLPKRDVNTVSEPDSQIPPGFRG.

It belongs to the DnaT family. Homooligomerizes. Interacts with PriB. Component of the replication restart primosome. Primosome assembly occurs via a 'hand-off' mechanism. PriA binds to replication forks, subsequently PriB then DnaT bind; DnaT then displaces ssDNA to generate the helicase loading substrate.

Involved in the restart of stalled replication forks, which reloads the replicative helicase on sites other than the origin of replication. Can function in multiple replication restart pathways. Displaces ssDNA from a PriB-ssDNA complex. Probably forms a spiral filament on ssDNA. The polypeptide is Replication restart protein DnaT (Shigella boydii serotype 18 (strain CDC 3083-94 / BS512)).